The primary structure comprises 666 residues: Zinc finger MYM-type protein 5 (666 aa).

Glycyl lysine isopeptide (Lys-Gly) (interchain with G-Cter in SUMO2) cross-links involve residues Lys-85, Lys-88, Lys-146, and Lys-163. The disordered stretch occupies residues 87–106; it reads EKPQGNYSVIPPPSRDLASQ. Positions 191–212 are disordered; the sequence is SPDSWISQSASFPRNQKQPGVD. The segment covering 194–208 has biased composition (polar residues); that stretch reads SWISQSASFPRNQKQ. Lys-222 participates in a covalent cross-link: Glycyl lysine isopeptide (Lys-Gly) (interchain with G-Cter in SUMO2). 4 MYM-type zinc fingers span residues 262–296, 308–348, 355–390, and 401–428; these read HLFC…KKAD, QEFC…RHEV, HKLC…KSTG, and KRFC…ASEN. Glycyl lysine isopeptide (Lys-Gly) (interchain with G-Cter in SUMO2) cross-links involve residues Lys-440, Lys-452, Lys-459, and Lys-549.

Interacts (via N-terminal 120 amino acid region) with ETV5 (via C-terminal).

It is found in the nucleus. In terms of biological role, functions as a transcriptional regulator. In Macaca fascicularis (Crab-eating macaque), this protein is Zinc finger MYM-type protein 5 (ZMYM5).